The following is a 147-amino-acid chain: Large ribosomal subunit protein uL13 (147 aa).

It belongs to the universal ribosomal protein uL13 family. As to quaternary structure, part of the 50S ribosomal subunit.

In terms of biological role, this protein is one of the early assembly proteins of the 50S ribosomal subunit, although it is not seen to bind rRNA by itself. It is important during the early stages of 50S assembly. This chain is Large ribosomal subunit protein uL13, found in Limosilactobacillus fermentum (strain NBRC 3956 / LMG 18251) (Lactobacillus fermentum).